The chain runs to 364 residues: Poly(3-hydroxyalkanoate) polymerase subunit PhaE (364 aa).

Positions 322 to 364 (SGKTPTTALKAPAPATKATEKPATRATTRRKTAAKPTGGTADD) are disordered. The segment covering 324–338 (KTPTTALKAPAPATK) has biased composition (low complexity).

Belongs to the PHA/PHB synthase family. Type III PhaE subfamily. As to quaternary structure, forms a heterodimer with PhaC, which may multimerize in the presence of 3-hydroxybutyryl-CoA.

The protein localises to the cytoplasm. Its pathway is biopolymer metabolism; poly-(R)-3-hydroxybutanoate biosynthesis. Functionally, polymerizes D(-)-3-hydroxybutyryl-CoA to create polyhydroxybutyrate (PHB) which consists of thousands of hydroxybutyrate molecules linked end to end. This subunit has no catalytic activity but enhances the activity of PhaC, the catalytic subunit. This Thiocystis violacea protein is Poly(3-hydroxyalkanoate) polymerase subunit PhaE.